We begin with the raw amino-acid sequence, 155 residues long: Probable tellurium resistance transcriptional regulator TerW (155 aa).

Functionally, involved in tellurite resistance. TerW binds specifically to the potential promoter region of the terZABCDE operon and probably regulates expression of the genes. This chain is Probable tellurium resistance transcriptional regulator TerW, found in Escherichia coli.